We begin with the raw amino-acid sequence, 418 residues long: AP-3 complex subunit mu-1 (418 aa).

The MHD domain occupies 176 to 417 (NNEAYFDVVE…VTKAGKFQVR (242 aa)).

The protein belongs to the adaptor complexes medium subunit family. As to quaternary structure, adaptor protein complex 3 (AP-3) is a heterotetramer composed of two large adaptins (delta-type subunit AP3D1 and beta-type subunit AP3B1 or AP3B2), a medium adaptin (mu-type subunit AP3M1 or AP3M2) and a small adaptin (sigma-type subunit APS1 or AP3S2). Interacts with AGAP1. AP-3 associates with the BLOC-1 complex. In terms of assembly, (Microbial infection) Interacts with human respiratory virus (HRSV) matrix protein; this interaction plays an essential role in trafficking the matrix protein in host cells.

The protein localises to the golgi apparatus. It is found in the cytoplasmic vesicle membrane. Its function is as follows. Part of the AP-3 complex, an adaptor-related complex which is not clathrin-associated. The complex is associated with the Golgi region as well as more peripheral structures. It facilitates the budding of vesicles from the Golgi membrane and may be directly involved in trafficking to lysosomes. In concert with the BLOC-1 complex, AP-3 is required to target cargos into vesicles assembled at cell bodies for delivery into neurites and nerve terminals. This Homo sapiens (Human) protein is AP-3 complex subunit mu-1 (AP3M1).